Consider the following 494-residue polypeptide: MEVVEAAAAQLETLKFNGTDFGVGEGPAAPSPGSAPVPGTQPPLQSFEGSPDAGQTVEVKPAGEQPLQPVLNAVAAGTPAPQPQPPAESPACGDCVTSPGAAEPARAPDSLETSDSDSDSDSETDSDSSSSSSSSSSSSSSSSSSCISLPPVLSDGDDDLQIEKENKNFPLKTKDELLLNELPSVEELTIILPEDIELKPLGMVSSIIEQLVIIESMTNLPPVNEETVIFKSDRQAAGKIFEIFGPVAHPFYVLRFNSSDHIESKGIKIKETMYFAPSMKDFTQYIFTEKLKQDKGSDASWKNDQEPPPEALDFSDDEKEKEAKQRKKSQIQGRKKLKSEFNEPGEDFTEVHQNWNAHSSASEHAKGYRNREFTRGFSRARYPRSCHGRPPPQHFYNSEHMVSQETSGFPSQRQNNPIMPQYPFPLPVFDMHNFPLRPPPPPPPPPVNMGWATPNMAAHPLLNLPYSLPPPPPPPPLPPPPSSGDSNSHFGPYY.

At methionine 1 the chain carries N-acetylmethionine. 3 disordered regions span residues 18–159 (GTDF…GDDD), 296–347 (GSDA…PGED), and 462–494 (LNLP…GPYY). Residues 29–41 (APSPGSAPVPGTQ) are compositionally biased toward pro residues. The segment covering 112 to 126 (ETSDSDSDSDSETDS) has biased composition (acidic residues). Over residues 127-145 (DSSSSSSSSSSSSSSSSSS) the composition is skewed to low complexity. Basic and acidic residues predominate over residues 296 to 305 (GSDASWKNDQ). Serine 315 is modified (phosphoserine). Basic residues predominate over residues 324–337 (KQRKKSQIQGRKKL). Lysine 338 is covalently cross-linked (Glycyl lysine isopeptide (Lys-Gly) (interchain with G-Cter in SUMO2)). Pro residues predominate over residues 467–482 (SLPPPPPPPPLPPPPS). Positions 484 to 494 (GDSNSHFGPYY) are enriched in polar residues.

It belongs to the NAF1 family. During assembly of the complex, component of the small nucleolar ribonucleoprotein particles containing H/ACA-type snoRNAs (H/ACA snoRNPs) which contains NOLA2/NHP2, NOLA3/NOP10, NAF1 and DKC1/NOLA4. Interacts directly with DKC1/NOLA4.

Its subcellular location is the cytoplasm. The protein resides in the nucleus. Its function is as follows. RNA-binding protein required for the maturation of box H/ACA snoRNPs complex and ribosome biogenesis. During assembly of the H/ACA snoRNPs complex, it associates with the complex and disappears during maturation of the complex and is replaced by NOLA1/GAR1 to yield mature H/ACA snoRNPs complex. Probably competes with NOLA1/GAR1 for binding with DKC1/NOLA4. This is H/ACA ribonucleoprotein complex non-core subunit NAF1 (NAF1) from Homo sapiens (Human).